We begin with the raw amino-acid sequence, 167 residues long: Leptin (167 aa).

The signal sequence occupies residues 1 to 21 (MHWGTLCGFLWLWPYLFYVQA). Cys-117 and Cys-167 form a disulfide bridge.

Belongs to the leptin family. As to quaternary structure, interacts with SIGLEC6. In terms of tissue distribution, adipose tissue is the main source of leptin. It is also produced by other peripheral tissues such as the skeletal muscle. Expressed by intercalated and striated tracts of submandibular and parotid salivary gland intralobular ducts. Detected by fundic epithelium of the gastric mucosa. Secreted into blood and gastric juice.

Its subcellular location is the secreted. In terms of biological role, key player in the regulation of energy balance and body weight control. Once released into the circulation, has central and peripheral effects by binding LEPR, found in many tissues, which results in the activation of several major signaling pathways. In the hypothalamus, acts as an appetite-regulating factor that induces a decrease in food intake and an increase in energy consumption by inducing anorexinogenic factors and suppressing orexigenic neuropeptides, also regulates bone mass and secretion of hypothalamo-pituitary-adrenal hormones. In the periphery, increases basal metabolism, influences reproductive function, regulates pancreatic beta-cell function and insulin secretion, is pro-angiogenic for endothelial cell and affects innate and adaptive immunity. In the arcuate nucleus of the hypothalamus, activates by depolarization POMC neurons inducing FOS and SOCS3 expression to release anorexigenic peptides and inhibits by hyperpolarization NPY neurons inducing SOCS3 with a consequent reduction on release of orexigenic peptides. In addition to its known satiety inducing effect, has a modulatory role in nutrient absorption. In the intestine, reduces glucose absorption by enterocytes by activating PKC and leading to a sequential activation of p38, PI3K and ERK signaling pathways which exerts an inhibitory effect on glucose absorption. Acts as a growth factor on certain tissues, through the activation of different signaling pathways increases expression of genes involved in cell cycle regulation such as CCND1, via JAK2-STAT3 pathway, or VEGFA, via MAPK1/3 and PI3K-AKT1 pathways. May also play an apoptotic role via JAK2-STAT3 pathway and up-regulation of BIRC5 expression. Pro-angiogenic, has mitogenic activity on vascular endothelial cells and plays a role in matrix remodeling by regulating the expression of matrix metalloproteinases (MMPs) and tissue inhibitors of metalloproteinases (TIMPs). In innate immunity, modulates the activity and function of neutrophils by increasing chemotaxis and the secretion of oxygen radicals. Increases phagocytosis by macrophages and enhances secretion of pro-inflammatory mediators. Increases cytotoxic ability of NK cells. Plays a pro-inflammatory role, in synergy with IL1B, by inducing NOS2 which promotes the production of IL6, IL8 and Prostaglandin E2, through a signaling pathway that involves JAK2, PI3K, MAP2K1/MEK1 and MAPK14/p38. In adaptive immunity, promotes the switch of memory T-cells towards T helper-1 cell immune responses. Increases CD4(+)CD25(-) T-cell proliferation and reduces autophagy during TCR (T-cell receptor) stimulation, through MTOR signaling pathway activation and BCL2 up-regulation. The sequence is that of Leptin from Homo sapiens (Human).